The primary structure comprises 263 residues: Indole-3-glycerol phosphate synthase (263 aa).

The protein belongs to the TrpC family.

The enzyme catalyses 1-(2-carboxyphenylamino)-1-deoxy-D-ribulose 5-phosphate + H(+) = (1S,2R)-1-C-(indol-3-yl)glycerol 3-phosphate + CO2 + H2O. It functions in the pathway amino-acid biosynthesis; L-tryptophan biosynthesis; L-tryptophan from chorismate: step 4/5. In Rhodospirillum rubrum (strain ATCC 11170 / ATH 1.1.1 / DSM 467 / LMG 4362 / NCIMB 8255 / S1), this protein is Indole-3-glycerol phosphate synthase.